The following is a 380-amino-acid chain: Actinidain (380 aa).

The first 24 residues, 1–24, serve as a signal peptide directing secretion; the sequence is MGLPKSFVSMSLLFFSTLLILSLA. Positions 25 to 126 are cleaved as a propeptide — activation peptide; that stretch reads FNAKNLTQRT…NRYEPRVGQV (102 aa). N-linked (GlcNAc...) asparagine glycans are attached at residues Asn-29, Asn-81, and Asn-111. 3 disulfide bridges follow: Cys-148/Cys-191, Cys-182/Cys-224, and Cys-282/Cys-332. Cys-151 is an active-site residue. Residues His-288 and Asn-308 contribute to the active site.

Belongs to the peptidase C1 family. Fruit, present in small cells of the outer pericarp of mature fruit, but not large cells.

It carries out the reaction Specificity close to that of papain.. Cysteine protease responsible for the cleavage of kiwellin into kissper and KiTH. The chain is Actinidain from Actinidia deliciosa (Kiwi).